The chain runs to 883 residues: Probable valine--tRNA ligase, cytoplasmic (883 aa).

Over residues 1 to 23 (MTLKMDRKALKEEKKKQKLEKFL) the composition is skewed to basic and acidic residues. The tract at residues 1–49 (MTLKMDRKALKEEKKKQKLEKFLNKKTTQSKISKAPKPAKNKSSSGYDP) is disordered. The segment covering 30–45 (SKISKAPKPAKNKSSS) has biased composition (low complexity). A 'HIGH' region motif is present at residues 82-92 (PNITGSLHIGH). The 'KMSKS' region signature appears at 586–590 (KMSKS). Lys-589 provides a ligand contact to ATP.

Belongs to the class-I aminoacyl-tRNA synthetase family.

The protein resides in the cytoplasm. It carries out the reaction tRNA(Val) + L-valine + ATP = L-valyl-tRNA(Val) + AMP + diphosphate. This Vairimorpha ceranae (strain BRL01) (Microsporidian parasite) protein is Probable valine--tRNA ligase, cytoplasmic.